A 396-amino-acid chain; its full sequence is Phosphoglycerate kinase (396 aa).

Residues 20–22 (DIN), R35, 58–61 (HQGR), R115, and R155 each bind substrate. Residues E328 and 353–356 (GGDT) each bind ATP.

It belongs to the phosphoglycerate kinase family. As to quaternary structure, monomer.

It is found in the cytoplasm. The enzyme catalyses (2R)-3-phosphoglycerate + ATP = (2R)-3-phospho-glyceroyl phosphate + ADP. It participates in carbohydrate degradation; glycolysis; pyruvate from D-glyceraldehyde 3-phosphate: step 2/5. In Natronomonas pharaonis (strain ATCC 35678 / DSM 2160 / CIP 103997 / JCM 8858 / NBRC 14720 / NCIMB 2260 / Gabara) (Halobacterium pharaonis), this protein is Phosphoglycerate kinase.